The sequence spans 303 residues: MLVMLQFSKYQGLGNDFLLIDGREDQLTQQVINPDPAWVRKICDRHFGIGADGLILALPPRADGDLRMQIFNADGSLAEMCGNGIRCLTRFLADIEGDLCVQRWNIETLAGIICPVLQEDGQICVDMGTPFLDPESIPTTLTIGSAGLPQGECHLGSTSLHVAAVGMGNPHLIVPVEDLENIPFENWGQRLEKHHAFPAKTNVHFLKIHSPNQLEIRVWERGSGPTLACGTGACASLVATCLLGLSDDHAEVLLPGGVLQISWPGRRGSVFMTGPAEPIFDGVLTPLLSPSHAEVLPQDDQII.

Substrate-binding residues include Asn15 and Asn72. The Proton donor role is filled by Cys81. Residues 82–83 (GN), Asn169, Asn202, and 220–221 (ER) each bind substrate. Catalysis depends on Cys229, which acts as the Proton acceptor. Residue 230 to 231 (GT) coordinates substrate.

It belongs to the diaminopimelate epimerase family. In terms of assembly, homodimer.

Its subcellular location is the cytoplasm. It catalyses the reaction (2S,6S)-2,6-diaminopimelate = meso-2,6-diaminopimelate. The protein operates within amino-acid biosynthesis; L-lysine biosynthesis via DAP pathway; DL-2,6-diaminopimelate from LL-2,6-diaminopimelate: step 1/1. Its function is as follows. Catalyzes the stereoinversion of LL-2,6-diaminopimelate (L,L-DAP) to meso-diaminopimelate (meso-DAP), a precursor of L-lysine and an essential component of the bacterial peptidoglycan. In Prochlorococcus marinus (strain MIT 9313), this protein is Diaminopimelate epimerase.